Consider the following 125-residue polypeptide: Gene 61 protein (125 aa).

In Mycobacterium phage D29 (Mycobacteriophage D29), this protein is Gene 61 protein (61).